The sequence spans 184 residues: Guanylate kinase (184 aa).

Residues lysine 5–lysine 183 enclose the Guanylate kinase-like domain. Glycine 12 to glycine 19 contributes to the ATP binding site.

This sequence belongs to the guanylate kinase family.

Its subcellular location is the cytoplasm. It carries out the reaction GMP + ATP = GDP + ADP. Functionally, essential for recycling GMP and indirectly, cGMP. The chain is Guanylate kinase from Prochlorococcus marinus subsp. pastoris (strain CCMP1986 / NIES-2087 / MED4).